A 1074-amino-acid polypeptide reads, in one-letter code: Topoisomerase 1-associated factor 1 (1074 aa).

Disordered stretches follow at residues Asn572–Ile595 and Glu936–Thr1074. 2 stretches are compositionally biased toward basic residues: residues Leu948–Ser962 and Gly978–Lys991. Over residues Glu1014 to Asp1031 the composition is skewed to basic and acidic residues. A compositionally biased stretch (basic residues) spans Val1046–Gly1055.

Belongs to the timeless family.

Its subcellular location is the nucleus. Functionally, involved in chromosome segregation during meiosis and DNA damage repair. The sequence is that of Topoisomerase 1-associated factor 1 (TOF1) from Cryptococcus neoformans var. neoformans serotype D (strain JEC21 / ATCC MYA-565) (Filobasidiella neoformans).